We begin with the raw amino-acid sequence, 160 residues long: Transcription elongation factor GreA (160 aa).

A coiled-coil region spans residues 1-31; the sequence is MAEKTYPMTLEEKEKLEKELEELKLVRRPEI.

It belongs to the GreA/GreB family.

Necessary for efficient RNA polymerase transcription elongation past template-encoded arresting sites. The arresting sites in DNA have the property of trapping a certain fraction of elongating RNA polymerases that pass through, resulting in locked ternary complexes. Cleavage of the nascent transcript by cleavage factors such as GreA or GreB allows the resumption of elongation from the new 3'terminus. GreA releases sequences of 2 to 3 nucleotides. This is Transcription elongation factor GreA from Streptococcus suis (strain 98HAH33).